Here is a 279-residue protein sequence, read N- to C-terminus: Thymidylate synthase (279 aa).

133–134 contributes to the dUMP binding site; sequence RR. Cysteine 154 (nucleophile) is an active-site residue. Residues 178 to 181, asparagine 189, and 219 to 221 each bind dUMP; these read RSND and HIY. Aspartate 181 lines the (6R)-5,10-methylene-5,6,7,8-tetrahydrofolate pocket. Residue alanine 278 coordinates (6R)-5,10-methylene-5,6,7,8-tetrahydrofolate.

It belongs to the thymidylate synthase family. Bacterial-type ThyA subfamily. Homodimer.

The protein resides in the cytoplasm. The enzyme catalyses dUMP + (6R)-5,10-methylene-5,6,7,8-tetrahydrofolate = 7,8-dihydrofolate + dTMP. Its pathway is pyrimidine metabolism; dTTP biosynthesis. Functionally, catalyzes the reductive methylation of 2'-deoxyuridine-5'-monophosphate (dUMP) to 2'-deoxythymidine-5'-monophosphate (dTMP) while utilizing 5,10-methylenetetrahydrofolate (mTHF) as the methyl donor and reductant in the reaction, yielding dihydrofolate (DHF) as a by-product. This enzymatic reaction provides an intracellular de novo source of dTMP, an essential precursor for DNA biosynthesis. The sequence is that of Thymidylate synthase from Streptococcus pneumoniae (strain 70585).